The chain runs to 535 residues: MNNARPIRRALLSVSDKTGILEFAKSLHAQGVELLSTGGTARLLADNGVPVIEVSDHTGHPEIMDGRVKTLHPKVHGGILARRGIDELVMEQNNIKPIDLVAVNLYPFAETVAKEGCTLADAVENIDIGGPTMVRSTAKNHKDTTIIVNAHDYDRVIAEMEANQGSTTLETRFDLAIAAFEHTAAYDGMIANYFGTKVPAHSQDECHERSLCAEDSKFPRTYNTQLVKKQDLRYGENSHQTAAFYVDTNIDEASVATAVQLQGKALSYNNIADTDSALECVKEFSEPACVIVKHANPCGVAIGENLLEAYNRAFQTDPTSAFGGIIAFNAELDAETAAAIVERQFVEVIIAPKVCQAARDVVAAKANVRLLECGEWANKTTSLDYKRVNGGLLLQDRDQGMVGLDEVKVVSKRQPTEAEMKDLMFCWKVAKFVKSNAIVYAKNSMTIGVGAGQMSRVYSAKVAGIKAADEGLEVQDSVMASDAFFPFRDGIDAAAAAGISCIIQPGGSIRDEEIIAAADEHGMAMVFTGMRHFRH.

The region spanning 1-148 is the MGS-like domain; sequence MNNARPIRRA…KNHKDTTIIV (148 aa).

The protein belongs to the PurH family.

The catalysed reaction is (6R)-10-formyltetrahydrofolate + 5-amino-1-(5-phospho-beta-D-ribosyl)imidazole-4-carboxamide = 5-formamido-1-(5-phospho-D-ribosyl)imidazole-4-carboxamide + (6S)-5,6,7,8-tetrahydrofolate. It catalyses the reaction IMP + H2O = 5-formamido-1-(5-phospho-D-ribosyl)imidazole-4-carboxamide. Its pathway is purine metabolism; IMP biosynthesis via de novo pathway; 5-formamido-1-(5-phospho-D-ribosyl)imidazole-4-carboxamide from 5-amino-1-(5-phospho-D-ribosyl)imidazole-4-carboxamide (10-formyl THF route): step 1/1. It functions in the pathway purine metabolism; IMP biosynthesis via de novo pathway; IMP from 5-formamido-1-(5-phospho-D-ribosyl)imidazole-4-carboxamide: step 1/1. The sequence is that of Bifunctional purine biosynthesis protein PurH from Shewanella woodyi (strain ATCC 51908 / MS32).